We begin with the raw amino-acid sequence, 391 residues long: Curcumin synthase 2 (391 aa).

Residue cysteine 166 is part of the active site.

This sequence belongs to the thiolase-like superfamily. Chalcone/stilbene synthases family. As to quaternary structure, homodimer.

The catalysed reaction is (E)-feruloylacetyl-CoA + (E)-feruloyl-CoA + H2O = curcumin + CO2 + 2 CoA. It functions in the pathway secondary metabolite biosynthesis; flavonoid biosynthesis. In terms of biological role, catalyzes the synthesis of curcumin by condensing feruloyl-CoA with a diketide-CoA in the curcuminoid biosynthesis. This Curcuma longa (Turmeric) protein is Curcumin synthase 2 (CURS2).